The primary structure comprises 450 residues: Bifunctional protein GlmU (450 aa).

The pyrophosphorylase stretch occupies residues 1-226; it reads MLAVAVLAAG…PDEVNGINNR (226 aa). Residues 7–10, Lys21, Gln73, and 78–79 each bind UDP-N-acetyl-alpha-D-glucosamine; these read LAAG and GT. Position 103 (Asp103) interacts with Mg(2+). UDP-N-acetyl-alpha-D-glucosamine-binding residues include Gly140, Glu155, Asn170, and Asn224. Asn224 is a binding site for Mg(2+). A linker region spans residues 227 to 247; that stretch reads KQLAQCEGVLQQRLRDYWMDE. Residues 248-450 form an N-acetyltransferase region; it reads GVTFVDPASC…TKDNWANRSI (203 aa). UDP-N-acetyl-alpha-D-glucosamine is bound by residues Arg329 and Lys347. Residue His359 is the Proton acceptor of the active site. Residues Tyr362 and Asn373 each coordinate UDP-N-acetyl-alpha-D-glucosamine. Acetyl-CoA-binding positions include Ala376, 382–383, Ala419, and Arg436; that span reads NY.

The protein in the N-terminal section; belongs to the N-acetylglucosamine-1-phosphate uridyltransferase family. In the C-terminal section; belongs to the transferase hexapeptide repeat family. Homotrimer. It depends on Mg(2+) as a cofactor.

It localises to the cytoplasm. It catalyses the reaction alpha-D-glucosamine 1-phosphate + acetyl-CoA = N-acetyl-alpha-D-glucosamine 1-phosphate + CoA + H(+). The enzyme catalyses N-acetyl-alpha-D-glucosamine 1-phosphate + UTP + H(+) = UDP-N-acetyl-alpha-D-glucosamine + diphosphate. It participates in nucleotide-sugar biosynthesis; UDP-N-acetyl-alpha-D-glucosamine biosynthesis; N-acetyl-alpha-D-glucosamine 1-phosphate from alpha-D-glucosamine 6-phosphate (route II): step 2/2. The protein operates within nucleotide-sugar biosynthesis; UDP-N-acetyl-alpha-D-glucosamine biosynthesis; UDP-N-acetyl-alpha-D-glucosamine from N-acetyl-alpha-D-glucosamine 1-phosphate: step 1/1. It functions in the pathway bacterial outer membrane biogenesis; LPS lipid A biosynthesis. Its function is as follows. Catalyzes the last two sequential reactions in the de novo biosynthetic pathway for UDP-N-acetylglucosamine (UDP-GlcNAc). The C-terminal domain catalyzes the transfer of acetyl group from acetyl coenzyme A to glucosamine-1-phosphate (GlcN-1-P) to produce N-acetylglucosamine-1-phosphate (GlcNAc-1-P), which is converted into UDP-GlcNAc by the transfer of uridine 5-monophosphate (from uridine 5-triphosphate), a reaction catalyzed by the N-terminal domain. In Synechococcus sp. (strain CC9902), this protein is Bifunctional protein GlmU.